The sequence spans 714 residues: Protein artemis (714 aa).

Disordered stretches follow at residues 391-500, 516-577, 598-617, and 638-683; these read ELFD…ESNA, ESSE…TVLI, ALLS…RWKL, and EKDA…LTPD. Residues 427–440 show a composition bias toward polar residues; sequence NESTESYRANTAYT. Residues 447–468 are compositionally biased toward acidic residues; it reads VDCEESNDDDDDDDDDDKEDDS. Composition is skewed to polar residues over residues 484–500 and 532–543; these read SIAS…ESNA and GSQSLFSDSDGV. Over residues 544–561 the composition is skewed to low complexity; that stretch reads SDSTHISSQNSSQSTHIS. The segment covering 562-577 has biased composition (polar residues); sequence EQGSQGWDSQMDTVLI. 2 stretches are compositionally biased toward basic and acidic residues: residues 603–615 and 660–670; these read DTPR…DSRW and RTPDLELKRDS. Ser670 is modified (phosphoserine; by ATM).

It belongs to the DNA repair metallo-beta-lactamase (DRMBL) family. In terms of assembly, interacts with PRKDC. Phosphorylation on undefined residues by PRKDC may stimulate endonucleolytic activity on 5' and 3' hairpins and overhangs. PRKDC must remain present, even after phosphorylation, for efficient hairpin opening.

It is found in the nucleus. Functionally, required for V(D)J recombination, the process by which exons encoding the antigen-binding domains of immunoglobulins and T-cell receptor proteins are assembled from individual V, (D), and J gene segments. V(D)J recombination is initiated by the lymphoid specific RAG endonuclease complex, which generates site specific DNA double strand breaks (DSBs). These DSBs present two types of DNA end structures: hairpin sealed coding ends and phosphorylated blunt signal ends. These ends are independently repaired by the non homologous end joining (NHEJ) pathway to form coding and signal joints respectively. This protein exhibits single-strand specific 5'-3' exonuclease activity in isolation, and acquires endonucleolytic activity on 5' and 3' hairpins and overhangs when in a complex with PRKDC. The latter activity is required specifically for the resolution of closed hairpins prior to the formation of the coding joint. May also be required for the repair of complex DSBs induced by ionizing radiation, which require substantial end-processing prior to religation by NHEJ. This Gallus gallus (Chicken) protein is Protein artemis (DCLRE1C).